The primary structure comprises 1409 residues: Mediator of RNA polymerase II transcription subunit 23 (1409 aa).

The disordered stretch occupies residues 1359–1409; that stretch reads ASAAGQGPAQGGPQSQQPQTTGQAGGQPSVPQQQQQTQQQQPQQQQQVQQQ.

It belongs to the Mediator complex subunit 23 family. As to quaternary structure, component of the Mediator complex.

The protein resides in the nucleus. Its function is as follows. Component of the Mediator complex, a coactivator involved in the regulated transcription of nearly all RNA polymerase II-dependent genes. Mediator functions as a bridge to convey information from gene-specific regulatory proteins to the basal RNA polymerase II transcription machinery. Mediator is recruited to promoters by direct interactions with regulatory proteins and serves as a scaffold for the assembly of a functional preinitiation complex with RNA polymerase II and the general transcription factors. The polypeptide is Mediator of RNA polymerase II transcription subunit 23 (MED23) (Aedes aegypti (Yellowfever mosquito)).